The following is a 119-amino-acid chain: Large ribosomal subunit protein bL20 (119 aa).

It belongs to the bacterial ribosomal protein bL20 family.

Functionally, binds directly to 23S ribosomal RNA and is necessary for the in vitro assembly process of the 50S ribosomal subunit. It is not involved in the protein synthesizing functions of that subunit. The protein is Large ribosomal subunit protein bL20 of Afipia carboxidovorans (strain ATCC 49405 / DSM 1227 / KCTC 32145 / OM5) (Oligotropha carboxidovorans).